A 388-amino-acid chain; its full sequence is Succinate--CoA ligase [ADP-forming] subunit beta (388 aa).

The ATP-grasp domain maps to 9–244; it reads KQLFAQYGLP…PAQNDAREAH (236 aa). ATP-binding positions include Lys-46, 53-55, Glu-99, Thr-102, and Glu-107; that span reads GRG. 2 residues coordinate Mg(2+): Asn-199 and Asp-213. Substrate-binding positions include Asn-264 and 321–323; that span reads GIV.

It belongs to the succinate/malate CoA ligase beta subunit family. As to quaternary structure, heterotetramer of two alpha and two beta subunits. The cofactor is Mg(2+).

The enzyme catalyses succinate + ATP + CoA = succinyl-CoA + ADP + phosphate. It catalyses the reaction GTP + succinate + CoA = succinyl-CoA + GDP + phosphate. It functions in the pathway carbohydrate metabolism; tricarboxylic acid cycle; succinate from succinyl-CoA (ligase route): step 1/1. Its function is as follows. Succinyl-CoA synthetase functions in the citric acid cycle (TCA), coupling the hydrolysis of succinyl-CoA to the synthesis of either ATP or GTP and thus represents the only step of substrate-level phosphorylation in the TCA. The beta subunit provides nucleotide specificity of the enzyme and binds the substrate succinate, while the binding sites for coenzyme A and phosphate are found in the alpha subunit. In Edwardsiella ictaluri (strain 93-146), this protein is Succinate--CoA ligase [ADP-forming] subunit beta.